The following is a 376-amino-acid chain: Natterin-2 (376 aa).

A signal peptide spans 1 to 18 (MNLSVLLVTLLLLSWTSA). A propeptide spanning residues 19-27 (EKDLKVRVA) is cleaved from the precursor.

This sequence belongs to the natterin family. Contains 4 disulfide bonds. In terms of tissue distribution, expressed by the venom gland.

The protein resides in the secreted. With respect to regulation, inhibited by tissue-kallikrein inhibitor TKI and trasylol. Plasma kallikrein inhibitor PKSI527 and classical inhibitors of serine-, metallo-, thiol- or aspartate-peptidases evokes a minor inhibition of the peptide digestion. Its function is as follows. Shows nociceptive, edema-inducing and kininogenase activity with release of kallidin from low molecular weight kininogen. The cleavage occurs at Met-Lys bonds. This Thalassophryne nattereri (Copper Joe toadfish) protein is Natterin-2.